Reading from the N-terminus, the 305-residue chain is MGARDFLTLEGCDRGELREILELAAGCEAGRMDGALAGKTVCLAFFEASTRTAVSFELAARRCGADVISLSERGSSISKGESLVDTVVTLDRLGADAIVLRHPAAGAARLAARFAAAAVVNAGDGCGQHPTQALLDLYSLSRSVGGFEELAGVRAAVVGDILHSRVARSVIPAFRAAGVELALVAPRTLLPVEAGVWGLPVLSSVDEALEWGASVLYMLRLQRERMTGARVPSVAEYARYYAVGRRHLEAGVRVMHPGPVNRGVEIAGDVVLDGASLIPDQVAAGVAVRSAVLALATGVAQEVAA.

2 residues coordinate carbamoyl phosphate: R51 and T52. K79 is a binding site for L-aspartate. 3 residues coordinate carbamoyl phosphate: R101, H129, and Q132. Positions 165 and 220 each coordinate L-aspartate. Residues G258 and P259 each coordinate carbamoyl phosphate.

This sequence belongs to the aspartate/ornithine carbamoyltransferase superfamily. ATCase family. Heterododecamer (2C3:3R2) of six catalytic PyrB chains organized as two trimers (C3), and six regulatory PyrI chains organized as three dimers (R2).

The enzyme catalyses carbamoyl phosphate + L-aspartate = N-carbamoyl-L-aspartate + phosphate + H(+). It participates in pyrimidine metabolism; UMP biosynthesis via de novo pathway; (S)-dihydroorotate from bicarbonate: step 2/3. Its function is as follows. Catalyzes the condensation of carbamoyl phosphate and aspartate to form carbamoyl aspartate and inorganic phosphate, the committed step in the de novo pyrimidine nucleotide biosynthesis pathway. In Rubrobacter xylanophilus (strain DSM 9941 / JCM 11954 / NBRC 16129 / PRD-1), this protein is Aspartate carbamoyltransferase catalytic subunit.